Here is a 109-residue protein sequence, read N- to C-terminus: Large ribosomal subunit protein uL24 (109 aa).

This sequence belongs to the universal ribosomal protein uL24 family. Part of the 50S ribosomal subunit.

In terms of biological role, one of two assembly initiator proteins, it binds directly to the 5'-end of the 23S rRNA, where it nucleates assembly of the 50S subunit. Its function is as follows. One of the proteins that surrounds the polypeptide exit tunnel on the outside of the subunit. This is Large ribosomal subunit protein uL24 from Syntrophotalea carbinolica (strain DSM 2380 / NBRC 103641 / GraBd1) (Pelobacter carbinolicus).